The sequence spans 171 residues: UPF0312 protein SAOUHSC_03022 (171 aa).

Belongs to the UPF0312 family.

In Staphylococcus aureus (strain NCTC 8325 / PS 47), this protein is UPF0312 protein SAOUHSC_03022.